We begin with the raw amino-acid sequence, 421 residues long: Gamma-glutamyl phosphate reductase (421 aa).

Belongs to the gamma-glutamyl phosphate reductase family.

Its subcellular location is the cytoplasm. It catalyses the reaction L-glutamate 5-semialdehyde + phosphate + NADP(+) = L-glutamyl 5-phosphate + NADPH + H(+). It functions in the pathway amino-acid biosynthesis; L-proline biosynthesis; L-glutamate 5-semialdehyde from L-glutamate: step 2/2. Functionally, catalyzes the NADPH-dependent reduction of L-glutamate 5-phosphate into L-glutamate 5-semialdehyde and phosphate. The product spontaneously undergoes cyclization to form 1-pyrroline-5-carboxylate. The polypeptide is Gamma-glutamyl phosphate reductase (Ruegeria sp. (strain TM1040) (Silicibacter sp.)).